The sequence spans 236 residues: Ribose-5-phosphate isomerase A (236 aa).

Residues 31 to 34 (TGST), 84 to 87 (DGAD), and 97 to 100 (KGGG) each bind substrate. Glutamate 106 acts as the Proton acceptor in catalysis. Residue lysine 124 coordinates substrate.

The protein belongs to the ribose 5-phosphate isomerase family. As to quaternary structure, homodimer.

The enzyme catalyses aldehydo-D-ribose 5-phosphate = D-ribulose 5-phosphate. It functions in the pathway carbohydrate degradation; pentose phosphate pathway; D-ribose 5-phosphate from D-ribulose 5-phosphate (non-oxidative stage): step 1/1. Its function is as follows. Catalyzes the reversible conversion of ribose-5-phosphate to ribulose 5-phosphate. The chain is Ribose-5-phosphate isomerase A from Polynucleobacter necessarius subsp. necessarius (strain STIR1).